We begin with the raw amino-acid sequence, 416 residues long: Enterobactin exporter EntS (416 aa).

At 1-21 (MNKQSWLLNLSLLKTHPAFRA) the chain is on the cytoplasmic side. Residues 22 to 42 (VFLARFISIVSLGLLGVAVPV) form a helical membrane-spanning segment. At 43–55 (QIQMMTHSTWQVG) the chain is on the periplasmic side. The helical transmembrane segment at 56–76 (LSVTLTGGAMFVGLMVGGVLA) threads the bilayer. Residues 77–83 (DRYERKK) are Cytoplasmic-facing. A helical membrane pass occupies residues 84 to 104 (VILLARGTCGIGFIGLCLNAL). Residues 105–109 (LPEPS) are Periplasmic-facing. Residues 110–130 (LLAIYLLGLWDGFFASLGVTA) form a helical membrane-spanning segment. At 131-156 (LLAATPALVGRENLMQAGAITMLTVR) the chain is on the cytoplasmic side. Residues 157–177 (LGSVISPMIGGLLLATGGVAW) form a helical membrane-spanning segment. Position 178 (N178) is a topological domain, periplasmic. Residues 179–199 (YGLAAAGTFITLLPLLSLPAL) form a helical membrane-spanning segment. The Cytoplasmic segment spans residues 200–218 (PPPPQPREHPLKSLLAGFR). Residues 219–239 (FLLASPLVGGIALLGGLLTMA) traverse the membrane as a helical segment. The Periplasmic segment spans residues 240 to 256 (SAVRVLYPALADNWQMS). A helical transmembrane segment spans residues 257-277 (AAQIGFLYAAIPLGAAIGALT). The Cytoplasmic segment spans residues 278-287 (SGKLAHSARP). A helical transmembrane segment spans residues 288 to 307 (GLLMLLSTLGSFLAIGLFGL). Residues 308 to 313 (MPMWIL) lie on the Periplasmic side of the membrane. The chain crosses the membrane as a helical span at residues 314-336 (GVICLALFGWLSAVSSLLQYTML). Topologically, residues 337-356 (QTQTPEAMLGRINGLWTAQN) are cytoplasmic. Residues 357–377 (VTGDAIGAALLGGLGAMMTPV) traverse the membrane as a helical segment. A378 is a topological domain (periplasmic). The chain crosses the membrane as a helical span at residues 379-399 (SASASGFGLLIIGVLLLLVLV). Over 400–416 (ELRRFRQTPPQVTASDS) the chain is Cytoplasmic.

This sequence belongs to the major facilitator superfamily. EntS (TC 2.A.1.38) family.

Its subcellular location is the cell inner membrane. Functionally, component of an export pathway for enterobactin. This is Enterobactin exporter EntS from Escherichia coli O81 (strain ED1a).